The following is a 2344-amino-acid chain: Mucin-4 (2344 aa).

Residues 1-30 (MRGPHGVSWRVPWLCLSCLCSCLLLLPVNT) form the signal peptide. Positions 32 to 46 (TTSAPKTSTALPSST) are enriched in low complexity. 5 disordered regions span residues 32–760 (TTSA…QGSI), 773–1036 (QKMS…TTST), 1072–1130 (VPSL…TPSV), 1171–1197 (STVA…MGAS), and 1233–1269 (SGLT…TVPP). Residues 47–100 (NPSQMTSQVSNPTASSYRMTKNTGQASPMVTSSSITTLPQSQHTGSMKTTRNPQ) show a composition bias toward polar residues. The interval 81 to 1006 (ITTLPQSQHT…VSTLVTSTQE (926 aa)) is variable number of tandem repeats (VNTR). Composition is skewed to low complexity over residues 101-116 (TTGT…ASSS) and 123-137 (TTSQ…TTTS). An O-linked (GalNAc...) threonine glycan is attached at Thr-133. Polar residues predominate over residues 142 to 225 (ESSSPPSTSV…GGMKTTRNPQ (84 aa)). The span at 226 to 273 (TTGTTEVTTTLSASSSDHPTSSPESTPGNTAPRTTETSTTTTTKVLMT) shows a compositional bias: low complexity. A compositionally biased stretch (polar residues) spans 274-305 (SLQQKLPTGSTLGTSTQELTTLPQSQHTGIMK). 2 stretches are compositionally biased toward low complexity: residues 306-322 (TTSR…TTRT) and 335-349 (TSSQ…TTTS). A compositionally biased stretch (polar residues) spans 373-436 (SGDTGHTMAV…GMKTTRNPQR (64 aa)). Thr-391 and Thr-392 each carry an O-linked (GalNAc...) threonine glycan. Over residues 437–446 (TTPTEVTTST) the composition is skewed to low complexity. A compositionally biased stretch (polar residues) spans 447–468 (LSASSSDQVQVETTSRATLSPD). Positions 469-492 (TTTTSHAPSVSSSSPSPPSTEGTS) are enriched in low complexity. O-linked (GalNAc...) threonine glycosylation is present at Thr-470. Ser-479 carries O-linked (GalNAc...) serine glycosylation. Over residues 493 to 509 (VDTGLTTAVTTQDSTPA) the composition is skewed to polar residues. Positions 510–546 (TTQGSLTSSSQTLSTVSPLSTSTQETSTQELTSSQSQ) are enriched in low complexity. The span at 547–580 (HTGSMKTTHNPQTTRNTEVTTTLSASSSDQVQVE) shows a compositional bias: polar residues. The segment covering 581–594 (TTSQTTLSDATTTS) has biased composition (low complexity). Positions 599–682 (ESSSPPSTSD…GGMKTTRNPQ (84 aa)) are enriched in polar residues. Low complexity-rich tracts occupy residues 683–698 (TTGT…ASSS) and 705–719 (TSSQ…TTTS). 2 stretches are compositionally biased toward polar residues: residues 724-760 (ESSS…QGSI) and 773-807 (QKMS…SSRP). The segment covering 808 to 828 (QTTSVTSTLSSSPSGSTPVQT) has biased composition (low complexity). The segment covering 829 to 868 (RSVTSSSDERTNPTSSGVSNTSPATTEVLTPTSSPESTPG) has biased composition (polar residues). Residues 869–915 (NTAPRTTETSTTTTTKVLMTSLQQKLPTGSTLGTSTPTEVTTTLSAS) are compositionally biased toward low complexity. Positions 916-994 (SSDQVQVETT…ISVTPSTQKM (79 aa)) are enriched in polar residues. Over residues 995-1015 (STVSTLVTSTQELTSSQSQRT) the composition is skewed to low complexity. Residues 1016-1026 (GSMGTSSKPQA) are compositionally biased toward polar residues. Low complexity predominate over residues 1027–1036 (TTPTEVTTST). A compositionally biased stretch (polar residues) spans 1072-1083 (VPSLMHSSKPQA). Residues 1084 to 1096 (TTPTEVTTSTLSS) show a composition bias toward low complexity. The span at 1097–1116 (FSRGSTQTQTVSWETSSSGK) shows a compositional bias: polar residues. Low complexity-rich tracts occupy residues 1118 to 1130 (TAPS…TPSV), 1175 to 1188 (HRQS…HSQS), and 1233 to 1267 (SGLT…RSTV). The region spanning 1332–1492 (GHSGVMLISL…TGYTGRCGPT (161 aa)) is the NIDO domain. The tract at residues 1574 to 1597 (GRHRTGLAAGTTSPLSASSTSSGG) is disordered. The segment covering 1580–1597 (LAAGTTSPLSASSTSSGG) has biased composition (low complexity). Positions 1609–1804 (RPAWTFGDPH…HYGMTSETNG (196 aa)) constitute a VWFD domain. 19 N-linked (GlcNAc...) asparagine glycosylation sites follow: Asn-1644, Asn-1660, Asn-1672, Asn-1689, Asn-1698, Asn-1704, Asn-1715, Asn-1724, Asn-1759, Asn-1780, Asn-1787, Asn-1829, Asn-1874, Asn-1926, Asn-1951, Asn-1974, Asn-1981, Asn-2029, and Asn-2048. The region spanning 2047–2086 (QNHSCPVNYCYNHGHCDISGPPDCQPTCTCAPAFTGNRCF) is the EGF-like 1 domain. Intrachain disulfides connect Cys-2051-Cys-2062, Cys-2056-Cys-2074, and Cys-2076-Cys-2085. N-linked (GlcNAc...) asparagine glycans are attached at residues Asn-2114 and Asn-2121. The chain crosses the membrane as a helical span at residues 2173–2193 (GPLIHYLNNQLISAVMEAFLL). A glycan (N-linked (GlcNAc...) asparagine) is linked at Asn-2227. The EGF-like 2 domain maps to 2256–2295 (VSPCSEGYCHNGGQCKHLPDGPQCTCATFSIYTSWGERCE). 3 cysteine pairs are disulfide-bonded: Cys-2259–Cys-2270, Cys-2264–Cys-2279, and Cys-2281–Cys-2294. A helical membrane pass occupies residues 2301–2321 (LGAFFGILFGALGALLLLAIL).

In terms of assembly, a heterodimeric complex, composed of a mucin-4 alpha chain and a cysteine-rich transmembrane mucin-4 beta chain. Mucin-4 beta chain interacts with ERBB2 via the EGF-like domain 1. In nonpolarized cells, associates with ERBB2 and ERBB3. Post-translationally, proteolytically cleaved into 2 subunits, mucin-4 alpha chain and mucin-4 beta chain. In terms of processing, mucin-4 alpha subunit is highly O-glycosylated. Mucin-4 beta subunit is predominantly N-glycosylated. As to expression, expression is developmentally regulated in the mammary gland, dramatically increases in the lactating gland compared with the virgin mammary gland, while decreasing again during mammary gland involution. Expressed in 13762 ascites cells. Overexpressed in some aggressive mammary tumors. Overexpression seems to block cell-cell and cell-matrix interactions to protect tumor cells from immune surveillance, and to promote metastasis.

It is found in the cell membrane. Its subcellular location is the secreted. Functionally, membrane-bound mucin, a family of highly glycosylated proteins that constitute the major component of the mucus, the slimy and viscous secretion covering epithelial surfaces. These glycoproteins play important roles in the protection of the epithelium and are implicated in epithelial renewal and differentiation. Regulates cellular behavior through both anti-adhesive effects on cell-cell and cell-extracellular matrix interactions and its ability to act as an intramembrane ligand for ERBB2. Plays an important role in proliferation and differentiation of epithelial cells by inducing specific phosphorylation of ERBB2. In polarized epithelial cells, segregates ERBB2 and other ERBB receptors and prevents ERBB2 from acting as a coreceptor. The interaction with ERBB2 leads to enhanced expression of CDKN1B. The formation of a MUC4-ERBB2-ERBB3-NRG1 complex leads to down-regulation of CDKN1B, resulting in repression of apoptosis and stimulation of proliferation. Its ability to promote tumor growth may be mainly due to repression of apoptosis as opposed to proliferation. The polypeptide is Mucin-4 (Muc4) (Rattus norvegicus (Rat)).